The following is a 106-amino-acid chain: NADH-quinone oxidoreductase subunit K (106 aa).

A run of 3 helical transmembrane segments spans residues Leu-9–Leu-29, Ile-35–Phe-55, and Phe-70–Phe-90.

This sequence belongs to the complex I subunit 4L family. NDH-1 is composed of 14 different subunits. Subunits NuoA, H, J, K, L, M, N constitute the membrane sector of the complex.

The protein resides in the cell inner membrane. It carries out the reaction a quinone + NADH + 5 H(+)(in) = a quinol + NAD(+) + 4 H(+)(out). Its function is as follows. NDH-1 shuttles electrons from NADH, via FMN and iron-sulfur (Fe-S) centers, to quinones in the respiratory chain. The immediate electron acceptor for the enzyme in this species is believed to be ubiquinone. Couples the redox reaction to proton translocation (for every two electrons transferred, four hydrogen ions are translocated across the cytoplasmic membrane), and thus conserves the redox energy in a proton gradient. In Granulibacter bethesdensis (strain ATCC BAA-1260 / CGDNIH1), this protein is NADH-quinone oxidoreductase subunit K.